We begin with the raw amino-acid sequence, 39 residues long: Photosystem II reaction center protein J (39 aa).

Residues 9 to 29 (LWLVATVGGMAAITVLGIFIY) traverse the membrane as a helical segment.

It belongs to the PsbJ family. PSII is composed of 1 copy each of membrane proteins PsbA, PsbB, PsbC, PsbD, PsbE, PsbF, PsbH, PsbI, PsbJ, PsbK, PsbL, PsbM, PsbT, PsbX, PsbY, PsbZ, Psb30/Ycf12, at least 3 peripheral proteins of the oxygen-evolving complex and a large number of cofactors. It forms dimeric complexes.

Its subcellular location is the plastid. It is found in the chloroplast thylakoid membrane. Its function is as follows. One of the components of the core complex of photosystem II (PSII). PSII is a light-driven water:plastoquinone oxidoreductase that uses light energy to abstract electrons from H(2)O, generating O(2) and a proton gradient subsequently used for ATP formation. It consists of a core antenna complex that captures photons, and an electron transfer chain that converts photonic excitation into a charge separation. In Porphyra purpurea (Red seaweed), this protein is Photosystem II reaction center protein J.